Here is a 498-residue protein sequence, read N- to C-terminus: Probable cytosol aminopeptidase (498 aa).

The Mn(2+) site is built by Lys-269 and Asp-274. Lys-281 is an active-site residue. Asp-292, Asp-351, and Glu-353 together coordinate Mn(2+). Arg-355 is an active-site residue.

This sequence belongs to the peptidase M17 family. Mn(2+) serves as cofactor.

It is found in the cytoplasm. It catalyses the reaction Release of an N-terminal amino acid, Xaa-|-Yaa-, in which Xaa is preferably Leu, but may be other amino acids including Pro although not Arg or Lys, and Yaa may be Pro. Amino acid amides and methyl esters are also readily hydrolyzed, but rates on arylamides are exceedingly low.. It carries out the reaction Release of an N-terminal amino acid, preferentially leucine, but not glutamic or aspartic acids.. Functionally, presumably involved in the processing and regular turnover of intracellular proteins. Catalyzes the removal of unsubstituted N-terminal amino acids from various peptides. The protein is Probable cytosol aminopeptidase of Glaesserella parasuis serovar 5 (strain SH0165) (Haemophilus parasuis).